We begin with the raw amino-acid sequence, 91 residues long: Acylphosphatase (91 aa).

The Acylphosphatase-like domain maps to 6-91 (CMRCYISGRV…WEDYITFDVL (86 aa)). Residues Arg21 and Asn39 contribute to the active site.

The protein belongs to the acylphosphatase family.

The enzyme catalyses an acyl phosphate + H2O = a carboxylate + phosphate + H(+). The sequence is that of Acylphosphatase (acyP) from Legionella pneumophila (strain Lens).